Reading from the N-terminus, the 590-residue chain is Aspartate--tRNA(Asp/Asn) ligase (590 aa).

L-aspartate is bound at residue E175. The segment at 199–202 (QQYK) is aspartate. The L-aspartate site is built by R221 and H450. 221–223 (RDE) is a binding site for ATP. E484 lines the ATP pocket. Residue R491 coordinates L-aspartate. An ATP-binding site is contributed by 536–539 (GVDR).

It belongs to the class-II aminoacyl-tRNA synthetase family. Type 1 subfamily. As to quaternary structure, homodimer.

It is found in the cytoplasm. It catalyses the reaction tRNA(Asx) + L-aspartate + ATP = L-aspartyl-tRNA(Asx) + AMP + diphosphate. In terms of biological role, aspartyl-tRNA synthetase with relaxed tRNA specificity since it is able to aspartylate not only its cognate tRNA(Asp) but also tRNA(Asn). Reaction proceeds in two steps: L-aspartate is first activated by ATP to form Asp-AMP and then transferred to the acceptor end of tRNA(Asp/Asn). The sequence is that of Aspartate--tRNA(Asp/Asn) ligase from Rhodopseudomonas palustris (strain BisA53).